A 197-amino-acid polypeptide reads, in one-letter code: MFITFEGIDGSGKSTQIKLLARYLEKRGKRVILKREPGGTETGEKIRKLLLKEEMTPKAELFLFLASRNLLVMEIKRYLSEGYVVLLDRYTDSSVAYQGFGRNLGKEIVEKLNDFATDSLVPDLTFYIDVDVETALNRKGELNRFEKREFLERVREGYLVLAKEHPERIVVLDGKRSIEEIHRDVVREVERRWKLDV.

Residue 7-14 (GIDGSGKS) participates in ATP binding.

Belongs to the thymidylate kinase family.

The enzyme catalyses dTMP + ATP = dTDP + ADP. Functionally, phosphorylation of dTMP to form dTDP in both de novo and salvage pathways of dTTP synthesis. This is Thymidylate kinase from Thermotoga petrophila (strain ATCC BAA-488 / DSM 13995 / JCM 10881 / RKU-1).